We begin with the raw amino-acid sequence, 552 residues long: Probable protein kinase UbiB (552 aa).

A helical transmembrane segment spans residues 22–42 (LLPANLPLAATLLLLPFKLFP). A Protein kinase domain is found at 118-498 (SFNIEPLASA…QQLARQRNRR (381 aa)). Residues 124–132 (LASASVAQV) and K146 each bind ATP. Catalysis depends on D281, which acts as the Proton acceptor. Transmembrane regions (helical) follow at residues 501-521 (ITLL…GEGI) and 530-550 (FGDI…AWLL).

Belongs to the ABC1 family. UbiB subfamily.

It is found in the cell inner membrane. Its pathway is cofactor biosynthesis; ubiquinone biosynthesis [regulation]. Is probably a protein kinase regulator of UbiI activity which is involved in aerobic coenzyme Q (ubiquinone) biosynthesis. The sequence is that of Probable protein kinase UbiB from Cellvibrio japonicus (strain Ueda107) (Pseudomonas fluorescens subsp. cellulosa).